Consider the following 195-residue polypeptide: Cyclin-dependent kinase inhibitor 7 (195 aa).

Residues 1–11 show a composition bias toward basic and acidic residues; sequence MSETKPKRDSE. Disordered stretches follow at residues 1-50, 61-80, and 117-154; these read MSET…SVSD, EEED…SSET, and SSEN…TQAE. Composition is skewed to low complexity over residues 37–50 and 68–80; these read SSSS…SVSD and SSSI…SSET. Threonine 151 bears the Phosphothreonine; by KIN10 mark.

This sequence belongs to the CDI family. ICK/KRP subfamily. Specifically interacts with CDKA-1, but not with CDKB1-1. Interacts with CYCD4-1. Binds to FBL17. Ubiquitinated by SCF(FBL17). Ubiquitination leads to its subsequent degradation, thus controlling cell cycle progression. In terms of tissue distribution, expressed in flowers, in developing pollen, and at lower levels in roots and leaves.

It is found in the nucleus. It localises to the nucleoplasm. Binds and inhibits CYCD2-1/CDKA-1 complex kinase activity. May target specifically CDKA-1. This chain is Cyclin-dependent kinase inhibitor 7 (KRP7), found in Arabidopsis thaliana (Mouse-ear cress).